The sequence spans 165 residues: NADPH-dependent 7-cyano-7-deazaguanine reductase (165 aa).

Residue C56 is the Thioimide intermediate of the active site. D63 (proton donor) is an active-site residue. Substrate contacts are provided by residues 78–80 (VES) and 97–98 (HE).

It belongs to the GTP cyclohydrolase I family. QueF type 1 subfamily.

It is found in the cytoplasm. The enzyme catalyses 7-aminomethyl-7-carbaguanine + 2 NADP(+) = 7-cyano-7-deazaguanine + 2 NADPH + 3 H(+). It participates in tRNA modification; tRNA-queuosine biosynthesis. Functionally, catalyzes the NADPH-dependent reduction of 7-cyano-7-deazaguanine (preQ0) to 7-aminomethyl-7-deazaguanine (preQ1). This chain is NADPH-dependent 7-cyano-7-deazaguanine reductase, found in Bacillus thuringiensis subsp. konkukian (strain 97-27).